Here is a 218-residue protein sequence, read N- to C-terminus: Glutathione S-transferase PM239X14 (218 aa).

In terms of domain architecture, GST N-terminal spans 2-85 (VTVKLYGMAY…YLVAKYGKGS (84 aa)). Residues 12–13 (ST), 41–42 (HK), 55–56 (VI), and 69–70 (ES) contribute to the glutathione site. The GST C-terminal domain occupies 93–218 (DPKAYGLFEQ…LLRNSSKEFM (126 aa)).

Belongs to the GST superfamily. Phi family. As to expression, expressed in vegetative rosettes.

Its subcellular location is the cytoplasm. It localises to the cytosol. The enzyme catalyses RX + glutathione = an S-substituted glutathione + a halide anion + H(+). Its function is as follows. Specifically catalyzes the conjugation of synthetic 1-chloro-2,4-ditrobenzene to GSH. Also functions as a glutathione peroxidase, converting linoleate oxidation products into their corresponding hydroxyacids. This enzyme may thus serve to protect the cell from oxygen toxicity as well as from exogenous toxins such as herbicides. In Arabidopsis thaliana (Mouse-ear cress), this protein is Glutathione S-transferase PM239X14.